The sequence spans 695 residues: Threonine--tRNA ligase (695 aa).

Residues 6–75 enclose the TGS domain; the sequence is SAIFVNTTDT…ETTATFTAVP (70 aa). A catalytic region spans residues 274 to 580; the sequence is DHRRLGTELD…LLEHYAGAFP (307 aa). Residues C379, H430, and H557 each coordinate Zn(2+).

The protein belongs to the class-II aminoacyl-tRNA synthetase family. Homodimer. Zn(2+) is required as a cofactor.

The protein localises to the cytoplasm. It catalyses the reaction tRNA(Thr) + L-threonine + ATP = L-threonyl-tRNA(Thr) + AMP + diphosphate + H(+). Catalyzes the attachment of threonine to tRNA(Thr) in a two-step reaction: L-threonine is first activated by ATP to form Thr-AMP and then transferred to the acceptor end of tRNA(Thr). Also edits incorrectly charged L-seryl-tRNA(Thr). This is Threonine--tRNA ligase from Corynebacterium glutamicum (strain ATCC 13032 / DSM 20300 / JCM 1318 / BCRC 11384 / CCUG 27702 / LMG 3730 / NBRC 12168 / NCIMB 10025 / NRRL B-2784 / 534).